The following is a 423-amino-acid chain: D-tagatose-1,6-bisphosphate aldolase subunit GatZ (423 aa).

This sequence belongs to the GatZ/KbaZ family. GatZ subfamily. As to quaternary structure, forms a complex with GatY.

Its pathway is carbohydrate metabolism; D-tagatose 6-phosphate degradation; D-glyceraldehyde 3-phosphate and glycerone phosphate from D-tagatose 6-phosphate: step 2/2. In terms of biological role, component of the tagatose-1,6-bisphosphate aldolase GatYZ that is required for full activity and stability of the Y subunit. Could have a chaperone-like function for the proper and stable folding of GatY. When expressed alone, GatZ does not show any aldolase activity. Is involved in the catabolism of galactitol. In Salmonella enteritidis PT4 (strain P125109), this protein is D-tagatose-1,6-bisphosphate aldolase subunit GatZ.